The primary structure comprises 631 residues: MSKSHAAYIDYALRRTTNMPVEMMGTDVVRLKDYQHFVARVFLGLDSMHSLLLFHETGVGKTMTTVYILKHLKDIYTNWAIILLVKKALIEDPWMNTILRYAPEITKDCIFINYDDQNFRNKFFTNIKTINSKSRICVIIDECHNFISKSLIKEDGKIRPTRSVYNFLSKTIALKNHKMICLSATPIVNSVQEFTMLVNLLRPGSLQHQSLFENKRLVNEKELVSKLGGLCSYIVNNEFSIFDDVEGSASFAKKTVLMRYVNMSKKQEEIYQKAKLTEIKTGISSFRILRRMATTFTFDSFPERQNRDPGEYAQEIATLYNDFKRSLRDREFSKSALDTFKKGELLGGDASAADISLFTELKEKSAKFIDVCLGILASHGKCLVFEPFVNQSGIEILLLYFKVFGISNIEFSSRTKDTRIKAVAEFNQESNTNGECIKTCVFSSSGGEGISFFSINDIFILDMTWNEASLRQIVGRAIRLNSHVLTPPERRYVNVHFIMARLSNGMPTVDEDLFEIIQSKSKEFVQLFRVFKHTSLEWIHANEKDFSPIDNESGWKTLVSRAIDLSSKKNITNKLIEGTNIWYSNSNRLMSINRGFKGVDGRVYDVDGNYLHDMPDNPVIKIHDGKLIYIF.

The Helicase ATP-binding domain maps to 42 to 204 (FLGLDSMHSL…TMLVNLLRPG (163 aa)). 55–62 (HETGVGKT) serves as a coordination point for ATP. Positions 141-144 (DECH) match the DEXH box motif. The 166-residue stretch at 367 to 532 (KFIDVCLGIL…EFVQLFRVFK (166 aa)) folds into the Helicase C-terminal domain. Residues 457 to 524 (DIFILDMTWN…EIIQSKSKEF (68 aa)) are binding to the cap-specific mRNA (nucleoside-2'-O-)-methyltransferase.

Belongs to the helicase family. NPH I subfamily. As to quaternary structure, monomer. Interacts (via C-terminus) with RAP94/OPG109 (via N-terminus). Interacts with the cap-specific mRNA (nucleoside-2'-O-)-methyltransferase OPG102.

It localises to the virion. It catalyses the reaction a ribonucleoside 5'-triphosphate + H2O = a ribonucleoside 5'-diphosphate + phosphate + H(+). In terms of biological role, DNA-dependent ATPase that acts as a 5' to 3' translocase on single-stranded DNA and thereby plays a role in transcription termination of viral early genes. Uses forward translocation in concert with the viral RNA polymerase RAP94/OPG109 subunit and the capping enzyme/VTF to catalyze release of UUUUUNU-containing nascent RNA from the elongation complex. In addition, acts as a positive elongation factor to assist transcription through problematic sequences. The protein is Nucleoside triphosphatase I (OPG123) of Variola virus (isolate Human/India/Ind3/1967) (VARV).